Here is a 491-residue protein sequence, read N- to C-terminus: Cobyric acid synthase (491 aa).

Residues Arg250 to Ala437 form the GATase cobBQ-type domain. The active-site Nucleophile is the Cys331. His429 is an active-site residue.

Belongs to the CobB/CobQ family. CobQ subfamily.

It functions in the pathway cofactor biosynthesis; adenosylcobalamin biosynthesis. In terms of biological role, catalyzes amidations at positions B, D, E, and G on adenosylcobyrinic A,C-diamide. NH(2) groups are provided by glutamine, and one molecule of ATP is hydrogenolyzed for each amidation. This Xanthomonas campestris pv. campestris (strain B100) protein is Cobyric acid synthase.